We begin with the raw amino-acid sequence, 318 residues long: Isoflavone reductase (318 aa).

Residues 11-17 (GATGAIG), arginine 36, and lysine 44 contribute to the NADP(+) site. Lysine 144 serves as the catalytic Proton acceptor. Arginine 148 serves as a coordination point for NADP(+).

It belongs to the NmrA-type oxidoreductase family. Isoflavone reductase subfamily.

It carries out the reaction (3R)-vestitone + NADP(+) = 2'-hydroxyformononetin + NADPH + 2 H(+). It participates in phytoalexin biosynthesis; pterocarpan phytoalexin biosynthesis. Functionally, reduces achiral isoflavones to chiral isoflavanones during the biosynthesis of chiral pterocarpan phytoalexins. The reduction product (sophrol) is a third isomer, which represents the penultimate intermediate in the synthesis of the phytoalexin (+)-pisatin, the major phytoalexin in pea. The sequence is that of Isoflavone reductase (IFR) from Pisum sativum (Garden pea).